We begin with the raw amino-acid sequence, 207 residues long: Large ribosomal subunit protein uL4 (207 aa).

The interval 49–78 (HAVKNRSAVSGGGRKPWRQKGTGRARQGSI) is disordered.

This sequence belongs to the universal ribosomal protein uL4 family. In terms of assembly, part of the 50S ribosomal subunit.

Its function is as follows. One of the primary rRNA binding proteins, this protein initially binds near the 5'-end of the 23S rRNA. It is important during the early stages of 50S assembly. It makes multiple contacts with different domains of the 23S rRNA in the assembled 50S subunit and ribosome. In terms of biological role, forms part of the polypeptide exit tunnel. The protein is Large ribosomal subunit protein uL4 of Streptococcus pneumoniae serotype 19F (strain G54).